Consider the following 551-residue polypeptide: Arginine--tRNA ligase (551 aa).

The short motif at 125–135 is the 'HIGH' region element; sequence ANPTGPLHIGH.

Belongs to the class-I aminoacyl-tRNA synthetase family. In terms of assembly, monomer.

The protein localises to the cytoplasm. It catalyses the reaction tRNA(Arg) + L-arginine + ATP = L-arginyl-tRNA(Arg) + AMP + diphosphate. The protein is Arginine--tRNA ligase of Oleidesulfovibrio alaskensis (strain ATCC BAA-1058 / DSM 17464 / G20) (Desulfovibrio alaskensis).